The following is a 379-amino-acid chain: UDP-N-acetylglucosamine--N-acetylmuramyl-(pentapeptide) pyrophosphoryl-undecaprenol N-acetylglucosamine transferase (379 aa).

Residues threonine 17–glycine 19, asparagine 128, arginine 169, serine 197, and glutamine 298 contribute to the UDP-N-acetyl-alpha-D-glucosamine site.

The protein belongs to the glycosyltransferase 28 family. MurG subfamily.

The protein resides in the cell inner membrane. It carries out the reaction di-trans,octa-cis-undecaprenyl diphospho-N-acetyl-alpha-D-muramoyl-L-alanyl-D-glutamyl-meso-2,6-diaminopimeloyl-D-alanyl-D-alanine + UDP-N-acetyl-alpha-D-glucosamine = di-trans,octa-cis-undecaprenyl diphospho-[N-acetyl-alpha-D-glucosaminyl-(1-&gt;4)]-N-acetyl-alpha-D-muramoyl-L-alanyl-D-glutamyl-meso-2,6-diaminopimeloyl-D-alanyl-D-alanine + UDP + H(+). The protein operates within cell wall biogenesis; peptidoglycan biosynthesis. Functionally, cell wall formation. Catalyzes the transfer of a GlcNAc subunit on undecaprenyl-pyrophosphoryl-MurNAc-pentapeptide (lipid intermediate I) to form undecaprenyl-pyrophosphoryl-MurNAc-(pentapeptide)GlcNAc (lipid intermediate II). This Brucella canis (strain ATCC 23365 / NCTC 10854 / RM-666) protein is UDP-N-acetylglucosamine--N-acetylmuramyl-(pentapeptide) pyrophosphoryl-undecaprenol N-acetylglucosamine transferase.